Reading from the N-terminus, the 1857-residue chain is Peripheral-type benzodiazepine receptor-associated protein 1 (1857 aa).

Disordered regions lie at residues 1 to 103 (MEQL…RPED), 284 to 321 (QRETLPLPPSWPPGPALQARAGAPAPGAPGEATPQEDA), and 565 to 629 (PKDL…DTAS). A compositionally biased stretch (basic and acidic residues) spans 55–67 (LRSEESSKPKGDG). Polar residues predominate over residues 87–96 (LGQQASSSGP). Positions 289-298 (PLPPSWPPGP) are enriched in pro residues. Composition is skewed to low complexity over residues 299–316 (ALQARAGAPAPGAPGEAT) and 603–616 (SLSNSSHSESIHNS). In terms of domain architecture, SH3 1 spans 653 to 720 (ARIQVFLARY…PSNFVERVSD (68 aa)). Residues 729–789 (PELADLSHSS…PSPEGLGEPP (61 aa)) are disordered. Positions 755–764 (GGQSSVGRSQ) are enriched in low complexity. Fibronectin type-III domains lie at 791 to 882 (VPYP…ARAG), 884 to 976 (VPSQ…TLPA), and 981 to 1081 (APLD…LAPA). Disordered stretches follow at residues 1083 to 1311 (LPAR…SDEE), 1330 to 1479 (FSIP…CSRG), and 1501 to 1601 (YDSE…RGVR). Over residues 1098 to 1116 (ARAPLASASPGPGDPSSPL) the composition is skewed to low complexity. Over residues 1138–1147 (EMAKGSHEDP) the composition is skewed to basic and acidic residues. Over residues 1201–1218 (ASSSTQGARAQQAPNTEM) the composition is skewed to polar residues. Acidic residues predominate over residues 1259–1274 (DIQEEEEEEEEEEEEE). A compositionally biased stretch (polar residues) spans 1278–1292 (RTCSFQKQVAGNSIR). Residues 1333-1346 (PEEEEEEEEDEEEE) show a composition bias toward acidic residues. Composition is skewed to basic and acidic residues over residues 1420-1429 (RPPDPREHCS) and 1554-1586 (AWEKGEPERRGRSATGRAKEPLSRATETGEARG). An SH3 2 domain is found at 1625–1693 (LPVRIFVALF…PCNMVAEVAV (69 aa)). 2 disordered regions span residues 1723 to 1761 (VYSTAHTTGPPPKPRRSKKAESEGPAQPCPGPPKLVPSA) and 1823 to 1857 (SNFLEGPGPEAGGLDREPRTPQAESQRTRRRRVQC). The SH3 3 domain occupies 1764–1831 (KAPHSMVAAF…PSNFLEGPGP (68 aa)).

This sequence belongs to the RIMBP family. As to quaternary structure, interacts with RIMS1 and RIMS2. Interacts with TSPO. Interacts with CACNA1A. In terms of tissue distribution, predominantly expressed in brain, pituitary gland and thymus in adults. In adult brain, highest expression found in temporal lobe and the putamen, followed by amygdala, caudate nucleus, cerebral cortex, occipital and frontal lobe. A high expression level is also observed in fetal tissues like brain, heart, kidney and thymus.

The protein resides in the cytoplasm. Its subcellular location is the mitochondrion. Functionally, required for synaptic transmission regulation. It probably controls the recruitement of voltage-gated calcium channels to the presynaptic membrane, and modulates neurotransmitter release. The chain is Peripheral-type benzodiazepine receptor-associated protein 1 from Homo sapiens (Human).